The following is a 619-amino-acid chain: tRNA uridine 5-carboxymethylaminomethyl modification enzyme MnmG (619 aa).

FAD-binding positions include 14–19 (GAGHAG), V126, and S181. Position 273–287 (273–287 (GPRYCPSIEDKIMRF)) interacts with NAD(+). Q370 contributes to the FAD binding site.

It belongs to the MnmG family. In terms of assembly, homodimer. Heterotetramer of two MnmE and two MnmG subunits. The cofactor is FAD.

The protein resides in the cytoplasm. Its function is as follows. NAD-binding protein involved in the addition of a carboxymethylaminomethyl (cmnm) group at the wobble position (U34) of certain tRNAs, forming tRNA-cmnm(5)s(2)U34. In Syntrophotalea carbinolica (strain DSM 2380 / NBRC 103641 / GraBd1) (Pelobacter carbinolicus), this protein is tRNA uridine 5-carboxymethylaminomethyl modification enzyme MnmG.